Here is a 439-residue protein sequence, read N- to C-terminus: MAAAAPDKAVERLSQKLVHPSSPTPSAPLRLSWLDRYPTQMALIESLHVFKPDPARDAAGQGLAPARAIETALARALVEYYPLAGRLAVSRDSGELQVDCCGGAGGHGGVWFIEAAVPCRLEDVDYLEYPLAISKDELLPHPRPRPTRDEEDKLILLVQVTTFACGGFVVGFRFSHAVADGPGAAQFMGAVGELARGGERITVAPSWGRDAVPDPAGAMVGALPEPAGASRLEYLAIDISADYINHFKSQFAAATGGARCSAFEVLIAKAWQSRTRAAAFDPSTPINLSFAMNARPLLLPRGGAGFYGNCYYIMRVASTAGRVATASVTDVVRMIREGKKRLPSEFARWAAGEMAGVDPYQITSDYRTLLVSDWTRLGFAEVDYGWGPPGHVVPLTNLDYIATCILVKPWAHKPGARLITQCVTPDRVTAFHDAMVDIN.

The interval 1–25 is disordered; the sequence is MAAAAPDKAVERLSQKLVHPSSPTP. Active-site proton acceptor residues include histidine 176 and aspartate 383.

Belongs to the plant acyltransferase family.

Involved in the incorporation of ferulate into the cell wall. May act as arabinoxylan feruloyl transferase. This chain is Acyl transferase 7, found in Oryza sativa subsp. japonica (Rice).